The primary structure comprises 155 residues: SsrA-binding protein (155 aa).

Belongs to the SmpB family.

It localises to the cytoplasm. Its function is as follows. Required for rescue of stalled ribosomes mediated by trans-translation. Binds to transfer-messenger RNA (tmRNA), required for stable association of tmRNA with ribosomes. tmRNA and SmpB together mimic tRNA shape, replacing the anticodon stem-loop with SmpB. tmRNA is encoded by the ssrA gene; the 2 termini fold to resemble tRNA(Ala) and it encodes a 'tag peptide', a short internal open reading frame. During trans-translation Ala-aminoacylated tmRNA acts like a tRNA, entering the A-site of stalled ribosomes, displacing the stalled mRNA. The ribosome then switches to translate the ORF on the tmRNA; the nascent peptide is terminated with the 'tag peptide' encoded by the tmRNA and targeted for degradation. The ribosome is freed to recommence translation, which seems to be the essential function of trans-translation. The polypeptide is SsrA-binding protein (Bacillus cytotoxicus (strain DSM 22905 / CIP 110041 / 391-98 / NVH 391-98)).